The sequence spans 90 residues: Probable Fe(2+)-trafficking protein (90 aa).

The protein belongs to the Fe(2+)-trafficking protein family.

Could be a mediator in iron transactions between iron acquisition and iron-requiring processes, such as synthesis and/or repair of Fe-S clusters in biosynthetic enzymes. The protein is Probable Fe(2+)-trafficking protein of Aeromonas hydrophila subsp. hydrophila (strain ATCC 7966 / DSM 30187 / BCRC 13018 / CCUG 14551 / JCM 1027 / KCTC 2358 / NCIMB 9240 / NCTC 8049).